Consider the following 1325-residue polypeptide: Nonribosomal peptide synthetase (1325 aa).

Residues 248–644 (YQQLDRLSTR…LGEIEYQIQQ (397 aa)) are adenylation. The region spanning 779–856 (EIVNPGEITL…DQARLLRPLS (78 aa)) is the Carrier domain. Position 816 is an O-(pantetheine 4'-phosphoryl)serine (serine 816). The tract at residues 893-1310 (EDVYPCTPLQ…DDYSTTLHTL (418 aa)) is condensation.

It belongs to the NRP synthetase family. The cofactor is pantetheine 4'-phosphate.

It functions in the pathway antifungal biosynthesis. Its function is as follows. Nonribosomal peptide synthetase; part of the gene cluster that mediates the biosynthesis of the tetrahydropyranyl antifungal agent lanomycin that acts as an inhibitor of CYP51 and blocks the ergosterol biosynthesis. The biosynthesis probably begins with the formation of an hexaketide, followed by methionine mediated alkylation of C-2 and C-6, and methylation of the reduced C-3 oxygen, pyran forming reductive ring closure, oxygenation of C-4, beta-keto reduction, enoyl reduction and dehydration of the remaining oxygens, and finally, acylation with glycine to complete the biosynthesis. This chain is Nonribosomal peptide synthetase, found in Pyrenophora dematioidea (Helminthosporium dematioideum).